We begin with the raw amino-acid sequence, 385 residues long: S-adenosylmethionine synthase (385 aa).

His16 provides a ligand contact to ATP. Residue Asp18 participates in Mg(2+) binding. Residue Glu44 coordinates K(+). Residues Glu57 and Gln100 each contribute to the L-methionine site. Residues 100–110 (QSPDINQGVDK) are flexible loop. Residues 165-167 (DAK), 231-232 (RF), Asp240, 246-247 (RK), Ala263, and Lys267 each bind ATP. Asp240 serves as a coordination point for L-methionine. L-methionine is bound at residue Lys271.

This sequence belongs to the AdoMet synthase family. As to quaternary structure, homotetramer; dimer of dimers. The cofactor is Mg(2+). K(+) is required as a cofactor.

It is found in the cytoplasm. It carries out the reaction L-methionine + ATP + H2O = S-adenosyl-L-methionine + phosphate + diphosphate. The protein operates within amino-acid biosynthesis; S-adenosyl-L-methionine biosynthesis; S-adenosyl-L-methionine from L-methionine: step 1/1. Catalyzes the formation of S-adenosylmethionine (AdoMet) from methionine and ATP. The overall synthetic reaction is composed of two sequential steps, AdoMet formation and the subsequent tripolyphosphate hydrolysis which occurs prior to release of AdoMet from the enzyme. The polypeptide is S-adenosylmethionine synthase (Vibrio cholerae serotype O1 (strain ATCC 39541 / Classical Ogawa 395 / O395)).